The chain runs to 435 residues: E3 ubiquitin-protein ligase itt1 (435 aa).

Residues 16–135 (DELIALQSIY…EHVRSIATIA (120 aa)) enclose the RWD domain. The segment at 170-420 (RKFQCNVCFD…DPVSSCYGML (251 aa)) is TRIAD supradomain. Zn(2+)-binding residues include C174, C177, C192, H194, C197, C200, C219, C224, C266, C271, C286, C289, C294, C297, H302, C308, C368, and C371. An RING-type 1 zinc finger spans residues 174–224 (CNVCFDEFNGTDCFQLTRCGHVSCQSCLRDYYTMCIQEGMFSQIKCIDLDC). Residues 245–308 (TNRYKELEEK…ATWHGDLSPC (64 aa)) form an IBR-type zinc finger. Residues 368–396 (CPTCDRVVERIDGCCHMNCLCGTHFCFLC) form an RING-type 2; atypical zinc finger. Residue C381 is part of the active site. C386, C388, C393, C396, H408, and C416 together coordinate Zn(2+).

Belongs to the RBR family. RNF14 subfamily.

It localises to the cytoplasm. Its subcellular location is the nucleus. It carries out the reaction [E2 ubiquitin-conjugating enzyme]-S-ubiquitinyl-L-cysteine + [acceptor protein]-L-lysine = [E2 ubiquitin-conjugating enzyme]-L-cysteine + [acceptor protein]-N(6)-ubiquitinyl-L-lysine.. Its pathway is protein modification; protein ubiquitination. E3 ubiquitin-protein ligase involved in the rescue of stalled ribosomes by promoting ubiquitination and degradation of proteins on stalled ribosomes. Specifically required to resolve RNA-protein cross-links caused by reactive aldehydes, which trigger translation stress by stalling ribosomes: acts by catalying 'Lys-6'-linked ubiquitination of RNA-protein cross-links, leading to their degradation. The sequence is that of E3 ubiquitin-protein ligase itt1 (itt1) from Schizosaccharomyces pombe (strain 972 / ATCC 24843) (Fission yeast).